We begin with the raw amino-acid sequence, 449 residues long: Argininosuccinate synthase (449 aa).

Residues 17-25 (AFSGGLDTS) and alanine 43 contribute to the ATP site. Tyrosine 99 lines the L-citrulline pocket. Residues glycine 129 and threonine 131 each coordinate ATP. Positions 131, 135, and 136 each coordinate L-aspartate. Asparagine 135 lines the L-citrulline pocket. Aspartate 136 is an ATP binding site. L-citrulline is bound by residues arginine 139 and serine 192. Aspartate 194 serves as a coordination point for ATP. L-citrulline is bound by residues threonine 201, glutamate 203, and glutamate 280.

The protein belongs to the argininosuccinate synthase family. Type 2 subfamily. As to quaternary structure, homotetramer.

The protein resides in the cytoplasm. It carries out the reaction L-citrulline + L-aspartate + ATP = 2-(N(omega)-L-arginino)succinate + AMP + diphosphate + H(+). It participates in amino-acid biosynthesis; L-arginine biosynthesis; L-arginine from L-ornithine and carbamoyl phosphate: step 2/3. The chain is Argininosuccinate synthase from Dickeya dadantii (strain 3937) (Erwinia chrysanthemi (strain 3937)).